Consider the following 44-residue polypeptide: Alpha-amylase inhibitor helianthamide (44 aa).

Intrachain disulfides connect C6-C38, C16-C33, and C20-C39. Residues 7–10 form an inhibitory motif region; sequence YIYH.

It belongs to the sea anemone alpha-amylase inhibitor family.

It is found in the secreted. Its function is as follows. Specific pancreatic alpha-amylase (AMY2A) inhibitor. The recombinant peptide inhibits human pancreatic (Ki=0.01 nM) and porcine pancreatic alpha-amylases (Ki=0.1 nM). The protein is Alpha-amylase inhibitor helianthamide of Stichodactyla helianthus (Sun anemone).